A 221-amino-acid polypeptide reads, in one-letter code: MAATEQNLRSTLKVGLEALQLQLSEQQINQLLAYQAMIAKWTQVYNLTSVRDPAEMMTHHLLDSLAAVPALQRYLHRSGLEQGSRLLDVGSGAGLPGVVIAICCPQVAVTCVDTVAKKAAFIKQAALALRLPNLTGLHARVESITESFDVICSRAFASLADFTKWSAGALAPQGVWMAMKGKHPADELLALPENIAMFHVEQLKVPGLDAERCILWLRPVS.

S-adenosyl-L-methionine-binding positions include Gly90, Leu95, 141-142 (VE), and Arg154.

This sequence belongs to the methyltransferase superfamily. RNA methyltransferase RsmG family.

It localises to the cytoplasm. It carries out the reaction guanosine(527) in 16S rRNA + S-adenosyl-L-methionine = N(7)-methylguanosine(527) in 16S rRNA + S-adenosyl-L-homocysteine. Functionally, specifically methylates the N7 position of guanine in position 527 of 16S rRNA. The sequence is that of Ribosomal RNA small subunit methyltransferase G from Polaromonas naphthalenivorans (strain CJ2).